Reading from the N-terminus, the 326-residue chain is Delta-aminolevulinic acid dehydratase (326 aa).

Positions 119, 121, and 129 each coordinate Zn(2+). K198 functions as the Schiff-base intermediate with substrate in the catalytic mechanism. The 5-aminolevulinate site is built by R208 and R220. E236 contacts Mg(2+). The Schiff-base intermediate with substrate role is filled by K251. 2 residues coordinate 5-aminolevulinate: S277 and Y316.

The protein belongs to the ALAD family. Homooctamer. The cofactor is Zn(2+).

It carries out the reaction 2 5-aminolevulinate = porphobilinogen + 2 H2O + H(+). The protein operates within porphyrin-containing compound metabolism; protoporphyrin-IX biosynthesis; coproporphyrinogen-III from 5-aminolevulinate: step 1/4. In terms of biological role, catalyzes an early step in the biosynthesis of tetrapyrroles. Binds two molecules of 5-aminolevulinate per subunit, each at a distinct site, and catalyzes their condensation to form porphobilinogen. The chain is Delta-aminolevulinic acid dehydratase (hemB) from Synechococcus elongatus (strain ATCC 33912 / PCC 7942 / FACHB-805) (Anacystis nidulans R2).